An 840-amino-acid polypeptide reads, in one-letter code: MSSNSGIQIPSRLPLLCTHDGVLLPGSTMRVSVDTARNMQLVKSRLLKGTSLKSTIIGVIPNTRDPEHDSDELPSLHSIGTAGLAVQVVGSNWPKPHYTLLITGLCRFRVSQLLRERPFPVAEVEQLDKLEQYTEGDPADGELGELSQRFYQAAVQLVGMLDMSVPVVAKLRRLLDSLPKETLPDVLAAMIRTSNKEKLQVLDAVDLEERFKKALPLLTRQIEGLKLLQKTRKLRPDDDKRVLSIRKGGVFPGRQFSLDEEVEDEDSDDTALLERKVKAAAMPEAALRVCLKELRRLKKMPQSMPEYALTRNYLEMMVELPWSKSTTDCLDIRAARVLLDNDHYAMEKLKKRVLEYLAVRQLKSTLKGPILCFVGPPGVGKTSVGRSIARTLGREFHRIALGGVCDQSDIRGHRRTYVGSMPGRIINGLKTVGVNNPVFLLDEVDKLGKSLQGDPAAALLEVLDPEQNHSFTDHYLNVPFDLSQVLFIATANTTATIPPALLDRMEVLQVPGYTQEEKVEIAHRHLIPHQLEQHGLTPQQLQIPQDTTLQIISKYTREAGVRSLERKIGAVCRAVAVKVAEGQKVSRSEAPTEQHAEQNTDSKVEDSGIAAPPEMPIVIDHVALKDILGPPLFEMEVSERLTLPGVAIGLAWTPMGGEIMFVEASRMEGEGQLTLTGQLGDVMKESAHLAISWLRSNAKTYLLNDGSADLLEGTDIHLHFPAGAVTKDGPSAGVTIVTCLASLLSGRLVRSDVAMTGEITLRGLVLPVGGIKDKVLAAHRANLKRIIIPKRNEKDLEEIPANVRADLDFVLAGTLDEVLNAAFDGGFPSAVNHPQVLSKL.

In terms of domain architecture, Lon N-terminal spans 13 to 222; sequence LPLLCTHDGV…KALPLLTRQI (210 aa). Residue 375–382 coordinates ATP; that stretch reads GPPGVGKT. The tract at residues 583 to 606 is disordered; the sequence is QKVSRSEAPTEQHAEQNTDSKVED. Residues 584-606 show a composition bias toward basic and acidic residues; sequence KVSRSEAPTEQHAEQNTDSKVED. The Lon proteolytic domain maps to 641–825; it reads LTLPGVAIGL…DEVLNAAFDG (185 aa). Catalysis depends on residues serine 731 and lysine 774. Residues 838–840 carry the Microbody targeting signal motif; sequence SKL.

It belongs to the peptidase S16 family.

It localises to the peroxisome matrix. The enzyme catalyses Hydrolysis of proteins in presence of ATP.. ATP-dependent serine protease that mediates the selective degradation of misfolded and unassembled polypeptides in the peroxisomal matrix. Necessary for type 2 peroxisome targeting signal (PTS2)-containing protein processing and facilitates peroxisome matrix protein import. In Danio rerio (Zebrafish), this protein is Lon protease homolog 2, peroxisomal (lonp2).